Here is a 465-residue protein sequence, read N- to C-terminus: Intraflagellar transport protein 54 (465 aa).

2 disordered regions span residues 119 to 301 and 347 to 366; these read VRSN…GFTM and LHGD…DKKP. A coiled-coil region spans residues 144–207; sequence LEALAREKAE…KQKQQQQQQQ (64 aa). Positions 146 to 198 are enriched in basic and acidic residues; that stretch reads ALAREKAEKERQRREQEQQERERKERERQEKEREEREKHELESRERAEAEQWK. A compositionally biased stretch (low complexity) spans 199–220; sequence QKQQQQQQQQQSAISPQKSPPK. Positions 222 to 242 are enriched in basic and acidic residues; sequence RFADDDKTRVEEHQPVIERPH.

This sequence belongs to the TRAF3IP1 family.

It localises to the cell projection. It is found in the cilium. The protein resides in the flagellum. Its subcellular location is the cytoplasm. The protein localises to the cytoskeleton. It localises to the flagellum axoneme. It is found in the flagellum basal body. In terms of biological role, component of the intraflagellar transport complex B (IFT-B) involved in flagellar assembly. The protein is Intraflagellar transport protein 54 of Giardia intestinalis (strain ATCC 50803 / WB clone C6) (Giardia lamblia).